We begin with the raw amino-acid sequence, 227 residues long: Cytidylate kinase (227 aa).

12 to 20 provides a ligand contact to ATP; the sequence is GPSGAGKGT.

Belongs to the cytidylate kinase family. Type 1 subfamily.

The protein localises to the cytoplasm. The enzyme catalyses CMP + ATP = CDP + ADP. The catalysed reaction is dCMP + ATP = dCDP + ADP. The polypeptide is Cytidylate kinase (Marinomonas sp. (strain MWYL1)).